A 329-amino-acid polypeptide reads, in one-letter code: Glycerol-3-phosphate dehydrogenase [NAD(P)+] (329 aa).

Tryptophan 11 and lysine 101 together coordinate NADPH. Positions 101, 132, and 134 each coordinate sn-glycerol 3-phosphate. Alanine 136 is an NADPH binding site. 5 residues coordinate sn-glycerol 3-phosphate: lysine 188, aspartate 241, serine 251, arginine 252, and asparagine 253. Catalysis depends on lysine 188, which acts as the Proton acceptor. Arginine 252 lines the NADPH pocket. An NADPH-binding site is contributed by glutamate 278.

It belongs to the NAD-dependent glycerol-3-phosphate dehydrogenase family.

The protein resides in the cytoplasm. The enzyme catalyses sn-glycerol 3-phosphate + NAD(+) = dihydroxyacetone phosphate + NADH + H(+). It catalyses the reaction sn-glycerol 3-phosphate + NADP(+) = dihydroxyacetone phosphate + NADPH + H(+). Its pathway is membrane lipid metabolism; glycerophospholipid metabolism. Catalyzes the reduction of the glycolytic intermediate dihydroxyacetone phosphate (DHAP) to sn-glycerol 3-phosphate (G3P), the key precursor for phospholipid synthesis. This is Glycerol-3-phosphate dehydrogenase [NAD(P)+] from Onion yellows phytoplasma (strain OY-M).